Reading from the N-terminus, the 141-residue chain is NADH dehydrogenase [ubiquinone] 1 alpha subcomplex subunit 11 (141 aa).

Alanine 2 is modified (N-acetylalanine). 2 helical membrane passes run 21-43 (KAYSTTSIASVAGLTAAAYRVTL) and 58-80 (QYTFTAAAVGAVFGLTTCISAHV).

It belongs to the complex I NDUFA11 subunit family. In terms of assembly, complex I is composed of 45 different subunits.

It is found in the mitochondrion inner membrane. Functionally, accessory subunit of the mitochondrial membrane respiratory chain NADH dehydrogenase (Complex I), that is believed not to be involved in catalysis. Complex I functions in the transfer of electrons from NADH to the respiratory chain. The immediate electron acceptor for the enzyme is believed to be ubiquinone. This chain is NADH dehydrogenase [ubiquinone] 1 alpha subcomplex subunit 11 (NDUFA11), found in Homo sapiens (Human).